The primary structure comprises 130 residues: Small ribosomal subunit protein uS11 (130 aa).

The segment at 1–21 (MAPQSKRSGGRKQKKHVPNGV) is disordered. Positions 8–17 (SGGRKQKKHV) are enriched in basic residues.

Belongs to the universal ribosomal protein uS11 family. As to quaternary structure, part of the 30S ribosomal subunit. Interacts with proteins S7 and S18. Binds to IF-3.

Located on the platform of the 30S subunit, it bridges several disparate RNA helices of the 16S rRNA. Forms part of the Shine-Dalgarno cleft in the 70S ribosome. This chain is Small ribosomal subunit protein uS11, found in Acaryochloris marina (strain MBIC 11017).